The chain runs to 661 residues: Pumilio domain-containing protein C56F2.08c (661 aa).

Residues 1–74 (MLYVSNLPVG…GPVQVMLAKP (74 aa)) enclose the RRM domain. At S102 the chain carries Phosphoserine. T104 is subject to Phosphothreonine. Position 105 is a phosphoserine (S105). One can recognise a PUM-HD domain in the interval 129-482 (INLDIVDSMI…RLMEEVGMTS (354 aa)). 4 Pumilio repeats span residues 191 to 226 (SMLD…AMLE), 227 to 263 (RIAP…LIVK), 264 to 302 (HLRP…VMAR), and 374 to 410 (HLAT…LLLK). Phosphoserine is present on residues S482, S486, S488, and S490.

It is found in the cytoplasm. This is Pumilio domain-containing protein C56F2.08c from Schizosaccharomyces pombe (strain 972 / ATCC 24843) (Fission yeast).